The sequence spans 229 residues: General odorant-binding protein 69 (229 aa).

Residues 1–20 form the signal peptide; that stretch reads MDRLLLVLLSSASLLLTVYG. An intrachain disulfide couples Cys66 to Cys106.

Belongs to the PBP/GOBP family.

It localises to the secreted. Functionally, present in the aqueous fluid surrounding olfactory sensory dendrites and are thought to aid in the capture and transport of hydrophobic odorants into and through this fluid. The sequence is that of General odorant-binding protein 69 (Obp69) from Anopheles gambiae (African malaria mosquito).